A 1233-amino-acid polypeptide reads, in one-letter code: MYRIGSSIKKSNQIRLATIRTTTNVVIRNYCSETSSTQPPPPEQGQETPKPIIKKKKQSREIFSEFVDDGDVVVDHRKHSQKKAVVDQRTQDFDKMLASLTMKDLKLMRYSDNPETFELFSREHFNINDAFEMNLTTKSLLQKQKEKEQKELPGSLFKTQKVIYDNYSQIKSDHIANELNKFKEEFEKPLVSAYNEVINQSNLLYRTKRAEERLIKKRIEKERKEYKLSGLEKHYRDIVQVRNALDFRGKTILAGSDEEDAWQRILERSEITDPHNLSRLHMMDEYNDLGYQTEITEDYINQLSIVPFDFANPASYSSMVNLIDQLVQVDTYRDPEEIASLLVAEKLRAIKKANDQGTEEGKKLSKLLQSQLILELKADRYLETYECTLPELPTPEEIKKFTIDELKELEIVRMAATRLEQYQEAKNRIHILEDNTKQDKIDNYKFYQQMNAPSVANSRDATNLLTVGEMSLKAGTRPSTEDEIIDLLPHDEEVREEHEDDLVDDEKVVATTNEEEPSQEVEESEPVPDIEDPFAINKDFFDKNGRFLLSDKIEAEEQEQEDLIKDDDVAIENVESLITEESVPIAVEESVTTVVEESVTKPPKFLERFAEKGKLPPIRNSNKDSVRQIAESLFNINFDYQEELDEIDGRMDAIDAFHENQEELPLDEREGELDEDIVRPLPSTLPDLKALSAKIRKNEEESLNMIANKYINQEVNEKTATEVLDQIYEAYKTNNLFDKDIIEHDKNTIREANGDVAIPESMYFEYDTTFSDLVDRDVIFKMPLKDTDLVRVLTHQLTETGLLKQEKVLKHNTDDMPVSKELVESNPDAFPDFVKEIIDQNPNDSTDMPITREYIETYDPLIKEFREKMSITKNKDGSVVEEVIEEELIKDENEEEEDEDEEDEGDNKQRVIERSDEVHDEIYDERRLYINLRPQIKDEGVISVPTSTKKITKPIEKDGIDNNDGWLMGKPFNMLNYRLNNQPNKLPMDNVQSEGERVPGEDEPDILVEELADEEDEEFKDLSPSFDQQPKIFEQTDLYYYLQQGKNQEWFRPEKISDKDITSLERRQTWYPRQHIKTYPFEFISSHNTTDQTIEDSWVNRKAVLKVNISAFNLSKTVQDRLAQLTANRYDPQKKVLTLVANNHKTLPENKYEVKRLFKELLHEASLADPNFVSVRTDNYKAPQPQSFVPSQAAKNQTRFNLYRLQGFPLLNNQQRQHMELYSHIRSHLDSTL.

Disordered stretches follow at residues 32–51 (SETSSTQPPPPEQGQETPKP), 510–529 (ATTNEEEPSQEVEESEPVPD), and 882–915 (EVIEEELIKDENEEEEDEDEEDEGDNKQRVIERS). 2 stretches are compositionally biased toward acidic residues: residues 513 to 529 (NEEEPSQEVEESEPVPD) and 882 to 905 (EVIEEELIKDENEEEEDEDEEDEG). Basic and acidic residues predominate over residues 906-915 (DNKQRVIERS).

This is an uncharacterized protein from Dictyostelium discoideum (Social amoeba).